The following is a 364-amino-acid chain: Alanine racemase (364 aa).

K39 serves as the catalytic Proton acceptor; specific for D-alanine. At K39 the chain carries N6-(pyridoxal phosphate)lysine. A substrate-binding site is contributed by R137. Residue Y258 is the Proton acceptor; specific for L-alanine of the active site. M306 is a substrate binding site.

This sequence belongs to the alanine racemase family. Pyridoxal 5'-phosphate serves as cofactor.

The enzyme catalyses L-alanine = D-alanine. The protein operates within amino-acid biosynthesis; D-alanine biosynthesis; D-alanine from L-alanine: step 1/1. Functionally, catalyzes the interconversion of L-alanine and D-alanine. May also act on other amino acids. In Methylobacterium sp. (strain 4-46), this protein is Alanine racemase (alr).